A 730-amino-acid chain; its full sequence is Multifunctional procollagen lysine hydroxylase and glycosyltransferase (730 aa).

Residues 1–16 form the signal peptide; that stretch reads MRVLPFLLPLIPVLLA. Positions 20–280 are required for glycosyltransferase activity; that stretch reads TDLPELVVVT…CGLEVKESEE (261 aa). UDP contacts are provided by residues 30–32 and 98–100; these read VAT and DAY. 3 residues coordinate Mn(2+): Asp98, Asp101, and His242. UDP is bound at residue 245–248; that stretch reads GPSK. Residues Cys268 and Cys271 are joined by a disulfide bond. The segment at 281-507 is accessory region; the sequence is VPLIALNLFI…YYGFLIVSDE (227 aa). Cys554 and Cys690 are disulfide-bonded. 2-oxoglutarate contacts are provided by Arg590 and Tyr648. One can recognise a Fe2OG dioxygenase domain in the interval 639–730; it reads ESNMMFVVRY…RYIMVSFINP (92 aa). The Fe cation site is built by His659 and Asp661. Residues 664 to 707 form an important for dimerization region; sequence TFSIDIALNKKGRDYEGGGVRYIRYNCTVPADEVGYAMMFPGRL. An N-linked (GlcNAc...) asparagine glycan is attached at Asn689. His711 is a Fe cation binding site. Arg721 contributes to the 2-oxoglutarate binding site.

Homodimer. Fe(2+) serves as cofactor. L-ascorbate is required as a cofactor. The cofactor is Mn(2+).

Its subcellular location is the rough endoplasmic reticulum. It is found in the endoplasmic reticulum lumen. The protein resides in the endoplasmic reticulum membrane. The protein localises to the secreted. It localises to the extracellular space. The enzyme catalyses L-lysyl-[collagen] + 2-oxoglutarate + O2 = (5R)-5-hydroxy-L-lysyl-[collagen] + succinate + CO2. The catalysed reaction is (5R)-5-hydroxy-L-lysyl-[collagen] + UDP-alpha-D-galactose = (5R)-5-O-(beta-D-galactosyl)-5-hydroxy-L-lysyl-[collagen] + UDP + H(+). It carries out the reaction (5R)-5-O-(beta-D-galactosyl)-5-hydroxy-L-lysyl-[collagen] + UDP-alpha-D-glucose = (5R)-5-O-[alpha-D-glucosyl-(1-&gt;2)-beta-D-galactosyl]-5-hydroxy-L-lysyl-[collagen] + UDP + H(+). Multifunctional enzyme that catalyzes a series of post-translational modifications on Lys residues in procollagen. Catalyzes the formation of hydroxylysine residues in -Xaa-Lys-Gly- sequences in type IV collagens. Transfers galactose onto hydroxylysine groups, giving rise to galactosyl 5-hydroxylysine. Catalyzes the subsequent transfer of glucose moieties, giving rise to 1,2-glucosylgalactosyl-5-hydroxylysine residues. Essential for normal biosynthesis and secretion of type IV collagens. Essential for normal stability of the basement membrane. The sequence is that of Multifunctional procollagen lysine hydroxylase and glycosyltransferase (let-268) from Caenorhabditis elegans.